Here is a 188-residue protein sequence, read N- to C-terminus: Molybdopterin synthase catalytic subunit (188 aa).

Polar residues predominate over residues 1-10 (MSTSETSSYT). Residues 1–21 (MSTSETSSYTPDIPSEPVTKT) form a disordered region. Substrate contacts are provided by residues 123–124 (HR), lysine 139, and 146–148 (KLE).

This sequence belongs to the MoaE family. MOCS2B subfamily. As to quaternary structure, heterotetramer; composed of 2 small (MOCS2A) and 2 large (MOCS2B) subunits.

It is found in the cytoplasm. The catalysed reaction is 2 [molybdopterin-synthase sulfur-carrier protein]-C-terminal-Gly-aminoethanethioate + cyclic pyranopterin phosphate + H2O = molybdopterin + 2 [molybdopterin-synthase sulfur-carrier protein]-C-terminal Gly-Gly + 2 H(+). It participates in cofactor biosynthesis; molybdopterin biosynthesis. In terms of biological role, catalytic subunit of the molybdopterin synthase complex, a complex that catalyzes the conversion of precursor Z into molybdopterin. Acts by mediating the incorporation of 2 sulfur atoms from thiocarboxylated MOCS2A into precursor Z to generate a dithiolene group. This chain is Molybdopterin synthase catalytic subunit, found in Phaeosphaeria nodorum (strain SN15 / ATCC MYA-4574 / FGSC 10173) (Glume blotch fungus).